The sequence spans 162 residues: D-aminoacyl-tRNA deacylase (162 aa).

The short motif at 145–146 (GP) is the Gly-cisPro motif, important for rejection of L-amino acids element.

Belongs to the DTD family. In terms of assembly, homodimer.

The protein localises to the cytoplasm. It carries out the reaction glycyl-tRNA(Ala) + H2O = tRNA(Ala) + glycine + H(+). The catalysed reaction is a D-aminoacyl-tRNA + H2O = a tRNA + a D-alpha-amino acid + H(+). In terms of biological role, an aminoacyl-tRNA editing enzyme that deacylates mischarged D-aminoacyl-tRNAs. Also deacylates mischarged glycyl-tRNA(Ala), protecting cells against glycine mischarging by AlaRS. Acts via tRNA-based rather than protein-based catalysis; rejects L-amino acids rather than detecting D-amino acids in the active site. By recycling D-aminoacyl-tRNA to D-amino acids and free tRNA molecules, this enzyme counteracts the toxicity associated with the formation of D-aminoacyl-tRNA entities in vivo and helps enforce protein L-homochirality. In Bifidobacterium longum (strain DJO10A), this protein is D-aminoacyl-tRNA deacylase.